The sequence spans 308 residues: Taste receptor type 2 member 10 (308 aa).

At 1 to 6 (MLSVVE) the chain is on the extracellular side. Residues 7 to 27 (GIFIFVVISESVFGVLGNGFI) form a helical membrane-spanning segment. Residues 28-42 (GLVNCIDCAKNKLST) lie on the Cytoplasmic side of the membrane. A helical transmembrane segment spans residues 43 to 63 (IGFILTGLAISRIFLIWVIIT). Residues 64–100 (DGFIQIFSPDIYASGNLIEYISYIWVIGNQSSMWFAT) are Extracellular-facing. Asn92 carries an N-linked (GlcNAc...) asparagine glycan. The chain crosses the membrane as a helical span at residues 101 to 121 (SLSIFYFLKIANFSNYIFLWL). Topologically, residues 122–126 (KSRTN) are cytoplasmic. Residues 127–147 (MVLPFMMAFLLISSLLNFAHI) traverse the membrane as a helical segment. Topologically, residues 148–179 (VKILNDHKMKNDTVWHLNMYKSEYFIKQILLN) are extracellular. An N-linked (GlcNAc...) asparagine glycan is attached at Asn158. Residues 180-200 (LGVIFFFTLSLITCVLLIISL) traverse the membrane as a helical segment. Residues 201–227 (WRHNRQMQSNVTGLRDSNTEAHVKAMK) are Cytoplasmic-facing. A helical membrane pass occupies residues 228 to 248 (VLISFIILFILYFIGMALEIS). Topologically, residues 249–257 (RFTVPENKL) are extracellular. A helical membrane pass occupies residues 258 to 278 (LLMFGMTTTAIYPWGHSFILI). Residues 279–308 (LGNSKLKQASLRVLQQLKCCEKRKKSQSHI) lie on the Cytoplasmic side of the membrane.

Belongs to the G-protein coupled receptor T2R family.

The protein resides in the membrane. Functionally, receptor that may play a role in the perception of bitterness and is gustducin-linked. May play a role in sensing the chemical composition of the gastrointestinal content. The activity of this receptor may stimulate alpha gustducin, mediate PLC-beta-2 activation and lead to the gating of TRPM5. This is Taste receptor type 2 member 10 (TAS2R10) from Pongo pygmaeus (Bornean orangutan).